A 490-amino-acid polypeptide reads, in one-letter code: Ketol-acid reductoisomerase (NADP(+)) (490 aa).

The KARI N-terminal Rossmann domain occupies 16–207 (INKCRFMKKE…GGHRAGVLES (192 aa)). NADP(+) is bound by residues 44-47 (CGAQ), lysine 67, serine 77, and 107-109 (DKQ). The active site involves histidine 131. Glycine 157 provides a ligand contact to NADP(+). KARI C-terminal knotted domains lie at 208-343 (SFIA…TAPV) and 344-483 (YNEK…MKKM). Mg(2+)-binding residues include aspartate 216, glutamate 220, glutamate 388, and glutamate 392. Position 413 (serine 413) interacts with substrate.

This sequence belongs to the ketol-acid reductoisomerase family. Requires Mg(2+) as cofactor.

The catalysed reaction is (2R)-2,3-dihydroxy-3-methylbutanoate + NADP(+) = (2S)-2-acetolactate + NADPH + H(+). It carries out the reaction (2R,3R)-2,3-dihydroxy-3-methylpentanoate + NADP(+) = (S)-2-ethyl-2-hydroxy-3-oxobutanoate + NADPH + H(+). The protein operates within amino-acid biosynthesis; L-isoleucine biosynthesis; L-isoleucine from 2-oxobutanoate: step 2/4. It participates in amino-acid biosynthesis; L-valine biosynthesis; L-valine from pyruvate: step 2/4. In terms of biological role, involved in the biosynthesis of branched-chain amino acids (BCAA). Catalyzes an alkyl-migration followed by a ketol-acid reduction of (S)-2-acetolactate (S2AL) to yield (R)-2,3-dihydroxy-isovalerate. In the isomerase reaction, S2AL is rearranged via a Mg-dependent methyl migration to produce 3-hydroxy-3-methyl-2-ketobutyrate (HMKB). In the reductase reaction, this 2-ketoacid undergoes a metal-dependent reduction by NADPH to yield (R)-2,3-dihydroxy-isovalerate. This is Ketol-acid reductoisomerase (NADP(+)) from Buchnera aphidicola subsp. Acyrthosiphon pisum (strain 5A).